Consider the following 397-residue polypeptide: Phosphopentomutase (397 aa).

Residues Asp10, Asp296, His301, Asp337, His338, and His349 each coordinate Mn(2+).

It belongs to the phosphopentomutase family. The cofactor is Mn(2+).

The protein localises to the cytoplasm. It carries out the reaction 2-deoxy-alpha-D-ribose 1-phosphate = 2-deoxy-D-ribose 5-phosphate. The enzyme catalyses alpha-D-ribose 1-phosphate = D-ribose 5-phosphate. Its pathway is carbohydrate degradation; 2-deoxy-D-ribose 1-phosphate degradation; D-glyceraldehyde 3-phosphate and acetaldehyde from 2-deoxy-alpha-D-ribose 1-phosphate: step 1/2. Functionally, isomerase that catalyzes the conversion of deoxy-ribose 1-phosphate (dRib-1-P) and ribose 1-phosphate (Rib-1-P) to deoxy-ribose 5-phosphate (dRib-5-P) and ribose 5-phosphate (Rib-5-P), respectively. In Elusimicrobium minutum (strain Pei191), this protein is Phosphopentomutase.